The primary structure comprises 361 residues: Phospho-N-acetylmuramoyl-pentapeptide-transferase (361 aa).

Helical transmembrane passes span 25–45, 73–93, 97–117, 134–154, 168–188, 200–220, 237–257, 264–284, 289–309, and 338–358; these read RTVL…PAMI, TMGG…WADL, YVWI…VDDY, LFWQ…TAEL, VAVP…IVGT, GLAI…SYVA, AGEL…FLWF, VFMG…VTVI, IVML…MLQV, and QVVV…LSSL.

The protein belongs to the glycosyltransferase 4 family. MraY subfamily. It depends on Mg(2+) as a cofactor.

It is found in the cell inner membrane. It catalyses the reaction UDP-N-acetyl-alpha-D-muramoyl-L-alanyl-gamma-D-glutamyl-meso-2,6-diaminopimeloyl-D-alanyl-D-alanine + di-trans,octa-cis-undecaprenyl phosphate = di-trans,octa-cis-undecaprenyl diphospho-N-acetyl-alpha-D-muramoyl-L-alanyl-D-glutamyl-meso-2,6-diaminopimeloyl-D-alanyl-D-alanine + UMP. It participates in cell wall biogenesis; peptidoglycan biosynthesis. Catalyzes the initial step of the lipid cycle reactions in the biosynthesis of the cell wall peptidoglycan: transfers peptidoglycan precursor phospho-MurNAc-pentapeptide from UDP-MurNAc-pentapeptide onto the lipid carrier undecaprenyl phosphate, yielding undecaprenyl-pyrophosphoryl-MurNAc-pentapeptide, known as lipid I. This Nitrosospira multiformis (strain ATCC 25196 / NCIMB 11849 / C 71) protein is Phospho-N-acetylmuramoyl-pentapeptide-transferase.